Consider the following 987-residue polypeptide: Eukaryotic translation initiation factor 3 subunit A (987 aa).

A coiled-coil region spans residues 93–122; the sequence is LHLATDKAEQARSQADALEEALDVDDLEAD. The PCI domain occupies 316–513; the sequence is LQLIASSVVL…GVVIFGNLGI (198 aa). 2 coiled-coil regions span residues 556–742 and 797–858; these read TVEK…EKNR and LKIE…REEL. The segment covering 808-859 has biased composition (basic and acidic residues); the sequence is QEEEEARKQEEAERLKKVEAERKANLDKAFEKQRQREIELEEKSRREREELL. The tract at residues 808-987 is disordered; it reads QEEEEARKQE…GSSRPRPTQR (180 aa). Residues 872-894 show a composition bias toward low complexity; that stretch reads PTVTPVGTTAPAAAAAAAGAPAA. 2 stretches are compositionally biased toward polar residues: residues 905–916 and 976–987; these read TEVSGPSAPTSS and TFGSSRPRPTQR.

The protein belongs to the eIF-3 subunit A family. Component of the eukaryotic translation initiation factor 3 (eIF-3) complex. Binds to the translation initiation factor TIF3H1.

The protein localises to the cytoplasm. Functionally, RNA-binding component of the eukaryotic translation initiation factor 3 (eIF-3) complex, which is involved in protein synthesis of a specialized repertoire of mRNAs and, together with other initiation factors, stimulates binding of mRNA and methionyl-tRNAi to the 40S ribosome. The eIF-3 complex specifically targets and initiates translation of a subset of mRNAs involved in cell proliferation. In Arabidopsis thaliana (Mouse-ear cress), this protein is Eukaryotic translation initiation factor 3 subunit A (TIF3A1).